Consider the following 87-residue polypeptide: MLESKLINHIATQFLDGEKDGLDSQTPLFELNIVDSAAIFDLVDFLRQESKVSIGMQEIHPANFATVQSMVALVQRLKAHPEQGGAA.

The region spanning 1-78 is the Carrier domain; that stretch reads MLESKLINHI…SMVALVQRLK (78 aa). Ser36 carries the post-translational modification O-(pantetheine 4'-phosphoryl)serine.

It participates in antibiotic biosynthesis; prodigiosin biosynthesis. In terms of biological role, involved in the biosynthesis of 4-methoxy-2,2'-bipyrrole-5-carbaldehyde (MBC), one of the terminal products involved in the biosynthesis of the red antibiotic prodigiosin (Pig). Carrier of the L-prolyl group transferred from L-prolyl-AMP by PigI. The protein is Probable acyl carrier protein PigG of Serratia sp. (strain ATCC 39006) (Prodigiosinella confusarubida).